Reading from the N-terminus, the 432-residue chain is Enolase (432 aa).

Q166 provides a ligand contact to (2R)-2-phosphoglycerate. E208 serves as the catalytic Proton donor. Mg(2+) contacts are provided by D245, E291, and D318. (2R)-2-phosphoglycerate contacts are provided by K343, R372, S373, and K394. K343 serves as the catalytic Proton acceptor.

It belongs to the enolase family. Mg(2+) serves as cofactor.

The protein localises to the cytoplasm. It localises to the secreted. It is found in the cell surface. It catalyses the reaction (2R)-2-phosphoglycerate = phosphoenolpyruvate + H2O. It functions in the pathway carbohydrate degradation; glycolysis; pyruvate from D-glyceraldehyde 3-phosphate: step 4/5. Catalyzes the reversible conversion of 2-phosphoglycerate (2-PG) into phosphoenolpyruvate (PEP). It is essential for the degradation of carbohydrates via glycolysis. The sequence is that of Enolase from Leptospira borgpetersenii serovar Hardjo-bovis (strain L550).